Consider the following 138-residue polypeptide: Putative pre-16S rRNA nuclease (138 aa).

Belongs to the YqgF nuclease family.

The protein localises to the cytoplasm. Functionally, could be a nuclease involved in processing of the 5'-end of pre-16S rRNA. This is Putative pre-16S rRNA nuclease from Polaromonas sp. (strain JS666 / ATCC BAA-500).